Consider the following 103-residue polypeptide: Large ribosomal subunit protein bL21 (103 aa).

The protein belongs to the bacterial ribosomal protein bL21 family. As to quaternary structure, part of the 50S ribosomal subunit. Contacts protein L20.

In terms of biological role, this protein binds to 23S rRNA in the presence of protein L20. This is Large ribosomal subunit protein bL21 from Mycobacterium tuberculosis (strain ATCC 25618 / H37Rv).